Reading from the N-terminus, the 93-residue chain is U8-theraphotoxin-Hs1b (93 aa).

The first 18 residues, M1–C18, serve as a signal peptide directing secretion. 4 disulfides stabilise this stretch: C40-C54, C40-C81, C53-C66, and C84-C91.

The protein belongs to the neurotoxin 27 (Jztx-72) family. ICK-72 subfamily. Expressed by the venom gland.

Its subcellular location is the secreted. Functionally, probable neurotoxin with ion channel impairing activity. The polypeptide is U8-theraphotoxin-Hs1b (Cyriopagopus schmidti (Chinese bird spider)).